The sequence spans 391 residues: AIAAVITFLILFTIFGNALVILAVLTSRSLRAPQNLFLVSLAAADILVATLIIPFSLANELLGYWYFRRTWCEVYLALDVLFCTSSIVHLCAISLDRYWAVSRALEYNSKRTPRRIKCIILTVWLIAAVISLPPLIYKGDQGPQPRGRPQCKLNQEAWYILASSIGSFFAPCLIMILVYLRIYLIAKRSHCRGPRAKGAPGKGESKQTGQASLGAPSSAKLPNLVSRLVAAREANRHSKSTGEKVEGETPEGPGTPGVPPSWPPLPSSGRGQEEDIYRASPEEEAGDDEEEECEPQAVPVSPASACSPPLQQPQGSRVLATLRGQVLLSRGVGTASGQWWRRRAQLTREKRFTFVLAVVIGVFVLCWFPFFFSYSLGAICPQHCKVPHGLF.

Residues 1-25 form a helical membrane-spanning segment; sequence AIAAVITFLILFTIFGNALVILAVL. Over 26–36 the chain is Cytoplasmic; the sequence is TSRSLRAPQNL. A helical membrane pass occupies residues 37–62; it reads FLVSLAAADILVATLIIPFSLANELL. At 63–72 the chain is on the extracellular side; that stretch reads GYWYFRRTWC. A disulfide bond links cysteine 72 and cysteine 151. The chain crosses the membrane as a helical span at residues 73-95; the sequence is EVYLALDVLFCTSSIVHLCAISL. The Cytoplasmic segment spans residues 96–117; the sequence is DRYWAVSRALEYNSKRTPRRIK. The helical transmembrane segment at 118 to 140 threads the bilayer; it reads CIILTVWLIAAVISLPPLIYKGD. At 141–156 the chain is on the extracellular side; sequence QGPQPRGRPQCKLNQE. A helical membrane pass occupies residues 157 to 180; that stretch reads AWYILASSIGSFFAPCLIMILVYL. The Cytoplasmic segment spans residues 181–355; sequence RIYLIAKRSH…LTREKRFTFV (175 aa). Disordered stretches follow at residues 194 to 218 and 233 to 312; these read PRAK…APSS and EANR…PLQQ. Basic and acidic residues predominate over residues 233-247; the sequence is EANRHSKSTGEKVEG. Residues 256–266 show a composition bias toward pro residues; the sequence is PGVPPSWPPLP. The segment covering 271-281 has biased composition (basic and acidic residues); it reads GQEEDIYRASP. Over residues 282 to 294 the composition is skewed to acidic residues; that stretch reads EEEAGDDEEEECE. Residues 295-309 show a composition bias toward low complexity; sequence PQAVPVSPASACSPP. Residues 356–379 traverse the membrane as a helical segment; sequence LAVVIGVFVLCWFPFFFSYSLGAI. Topologically, residues 380 to 388 are extracellular; the sequence is CPQHCKVPH. The helical transmembrane segment at 389–391 threads the bilayer; it reads GLF.

It belongs to the G-protein coupled receptor 1 family. Adrenergic receptor subfamily. ADRA2B sub-subfamily. Interacts with RAB26. Interacts with PPP1R9B. Interacts with GGA1, GGA2 and GGA3.

Its subcellular location is the cell membrane. In terms of biological role, alpha-2 adrenergic receptors mediate the catecholamine-induced inhibition of adenylate cyclase through the action of G proteins. In Erinaceus europaeus (Western European hedgehog), this protein is Alpha-2B adrenergic receptor (ADRA2B).